Here is a 355-residue protein sequence, read N- to C-terminus: Uroporphyrinogen decarboxylase (355 aa).

Substrate contacts are provided by residues 27-31 (RQAGR), Asp77, Tyr154, Thr209, and His327.

Belongs to the uroporphyrinogen decarboxylase family. As to quaternary structure, homodimer.

It is found in the cytoplasm. The enzyme catalyses uroporphyrinogen III + 4 H(+) = coproporphyrinogen III + 4 CO2. It participates in porphyrin-containing compound metabolism; protoporphyrin-IX biosynthesis; coproporphyrinogen-III from 5-aminolevulinate: step 4/4. Functionally, catalyzes the decarboxylation of four acetate groups of uroporphyrinogen-III to yield coproporphyrinogen-III. The chain is Uroporphyrinogen decarboxylase from Yersinia pseudotuberculosis serotype O:1b (strain IP 31758).